The following is a 399-amino-acid chain: Mycinamicin VI 2''-O-methyltransferase (399 aa).

Residues Thr-173, 202-208, Ser-217, Asp-234, 252-253, and Asp-275 contribute to the S-adenosyl-L-methionine site; these read EIGVGGY and DQ. Residue Asp-275 coordinates Mg(2+). The Proton acceptor role is filled by His-278. Residues Glu-303 and Asp-304 each coordinate Mg(2+).

The protein belongs to the methyltransferase OleY/MycE family. As to quaternary structure, homotetramer. Mg(2+) is required as a cofactor.

It catalyses the reaction mycinamicin VI + S-adenosyl-L-methionine = mycinamicin III + S-adenosyl-L-homocysteine + H(+). Its pathway is antibiotic biosynthesis; mycinamicin biosynthesis. In terms of biological role, O-methyltransferase that catalyzes the conversion of mycinamicin VI to mycinamicin III in the biosynthesis of mycinamicin, a 16-membered macrolide antibiotic. This Micromonospora griseorubida protein is Mycinamicin VI 2''-O-methyltransferase (mycE).